The chain runs to 104 residues: UPF0473 protein SH1304 (104 aa).

It belongs to the UPF0473 family.

The sequence is that of UPF0473 protein SH1304 from Staphylococcus haemolyticus (strain JCSC1435).